The primary structure comprises 363 residues: Neurogenic differentiation factor 2 (363 aa).

The segment at 1–116 (MLTRLFKEPS…VRRQKANARE (116 aa)) is disordered. Residues 28-44 (EDSKTKDEEQERCRLGD) show a composition bias toward basic and acidic residues. Over residues 64–83 (AGEEDYDEDVDEDDCGEEGD) the composition is skewed to acidic residues. A compositionally biased stretch (basic residues) spans 87–98 (PKKRGPKKRKMT). A Nuclear localization signal motif is present at residues 93–99 (KKRKMTP). The 53-residue stretch at 107–159 (VRRQKANARERTRMHDLNSALDNLLKVVPCYSKTQKLSKIETLRLAKNYIWAL) folds into the bHLH domain.

As to quaternary structure, efficient DNA binding requires dimerization with another bHLH protein. As to expression, in adult, expressed strongly in brain and more weakly in skin, muscle, eye and ovary.

It localises to the nucleus. In terms of biological role, transcriptional regulator. Appears to mediate neuronal differentiation. This Danio rerio (Zebrafish) protein is Neurogenic differentiation factor 2.